A 496-amino-acid chain; its full sequence is MKLRELLATVDSVENLPPVLADTEVKGIKTNSHACGAGDLFIGMPGTRVDGGEFWPSAIASGAIAAIVSPQAVEKNPPSDEAVVISSNNMTKACAAIAAAFYGYPGQKLKLVGVTGTNGKTTTTHLIEFFLTKAQLSTALMGTLYTRWPGFEQTATHTTPFAVELQQQLAQAVNAGCEFGVMEVSSHALAQGRVLGCPFEVGVFSNLTQDHLDYHSDMEDYFAAKALLFSPDYLKGRAIINADDTYGQRLIKALSPEKVWSYSVNDSSADLWMSDLSYEPNGVTGTIHTPEGDVSFRSPLVGQYNLENLLASVGAVLHLGLDLQLIANAIPEFPGVPGRMERVQINPDQDISVIVDYAHTPDSLENLLKAARPFIPGRMICVFGCGGDRDRTKRPKMGKIAAELADLAFVTSDNPRTEDPEKILDDILAGIPDTVQPTVIGDRAIAIRTAILQAQPGDGVLLAGKGHEDYQILGTEKIHFDDREHARAALTEREKL.

Position 32 (serine 32) interacts with UDP-N-acetyl-alpha-D-muramoyl-L-alanyl-D-glutamate. 116 to 122 (GTNGKTT) lines the ATP pocket. UDP-N-acetyl-alpha-D-muramoyl-L-alanyl-D-glutamate-binding positions include 158–159 (TT), serine 185, glutamine 191, and arginine 193. Residue lysine 225 is modified to N6-carboxylysine. Meso-2,6-diaminopimelate-binding positions include arginine 389, 413 to 416 (DNPR), glycine 464, and glutamate 468. The Meso-diaminopimelate recognition motif signature appears at 413–416 (DNPR).

The protein belongs to the MurCDEF family. MurE subfamily. Requires Mg(2+) as cofactor. In terms of processing, carboxylation is probably crucial for Mg(2+) binding and, consequently, for the gamma-phosphate positioning of ATP.

The protein localises to the cytoplasm. It catalyses the reaction UDP-N-acetyl-alpha-D-muramoyl-L-alanyl-D-glutamate + meso-2,6-diaminopimelate + ATP = UDP-N-acetyl-alpha-D-muramoyl-L-alanyl-gamma-D-glutamyl-meso-2,6-diaminopimelate + ADP + phosphate + H(+). Its pathway is cell wall biogenesis; peptidoglycan biosynthesis. Functionally, catalyzes the addition of meso-diaminopimelic acid to the nucleotide precursor UDP-N-acetylmuramoyl-L-alanyl-D-glutamate (UMAG) in the biosynthesis of bacterial cell-wall peptidoglycan. This is UDP-N-acetylmuramoyl-L-alanyl-D-glutamate--2,6-diaminopimelate ligase from Trichormus variabilis (strain ATCC 29413 / PCC 7937) (Anabaena variabilis).